The primary structure comprises 229 residues: GTP cyclohydrolase 1 (229 aa).

The segment at 1–21 is disordered; it reads MTLAKPGSGSQSRMDDKAHFK. Zn(2+) contacts are provided by cysteine 116, histidine 119, and cysteine 187.

The protein belongs to the GTP cyclohydrolase I family. In terms of assembly, toroid-shaped homodecamer, composed of two pentamers of five dimers.

The enzyme catalyses GTP + H2O = 7,8-dihydroneopterin 3'-triphosphate + formate + H(+). Its pathway is cofactor biosynthesis; 7,8-dihydroneopterin triphosphate biosynthesis; 7,8-dihydroneopterin triphosphate from GTP: step 1/1. This chain is GTP cyclohydrolase 1, found in Synechococcus sp. (strain JA-2-3B'a(2-13)) (Cyanobacteria bacterium Yellowstone B-Prime).